We begin with the raw amino-acid sequence, 207 residues long: Riboflavin synthase (207 aa).

2 Lumazine-binding repeats span residues 1 to 94 and 95 to 191; these read MFTG…LGGH and IVQG…INYL. Residues 4 to 6, 45 to 47, 59 to 64, 98 to 100, lysine 133, 142 to 144, and 156 to 161 each bind 2,4-dihydroxypteridine; these read GLV, CLT, DVSPET, GHV, SLT, and NIIPHT.

Homotrimer.

It catalyses the reaction 2 6,7-dimethyl-8-(1-D-ribityl)lumazine + H(+) = 5-amino-6-(D-ribitylamino)uracil + riboflavin. It functions in the pathway cofactor biosynthesis; riboflavin biosynthesis; riboflavin from 2-hydroxy-3-oxobutyl phosphate and 5-amino-6-(D-ribitylamino)uracil: step 2/2. Catalyzes the dismutation of two molecules of 6,7-dimethyl-8-ribityllumazine, resulting in the formation of riboflavin and 5-amino-6-(D-ribitylamino)uracil. This chain is Riboflavin synthase (ribE), found in Aquifex aeolicus (strain VF5).